A 337-amino-acid polypeptide reads, in one-letter code: Anthranilate phosphoribosyltransferase (337 aa).

5-phospho-alpha-D-ribose 1-diphosphate-binding positions include G82, 85 to 86 (GD), T90, 92 to 95 (NIST), 110 to 118 (KHGGRSVSS), and S122. G82 is a binding site for anthranilate. S94 serves as a coordination point for Mg(2+). R168 is an anthranilate binding site. The Mg(2+) site is built by D226 and E227.

This sequence belongs to the anthranilate phosphoribosyltransferase family. Homodimer. Mg(2+) serves as cofactor.

It carries out the reaction N-(5-phospho-beta-D-ribosyl)anthranilate + diphosphate = 5-phospho-alpha-D-ribose 1-diphosphate + anthranilate. It participates in amino-acid biosynthesis; L-tryptophan biosynthesis; L-tryptophan from chorismate: step 2/5. Functionally, catalyzes the transfer of the phosphoribosyl group of 5-phosphorylribose-1-pyrophosphate (PRPP) to anthranilate to yield N-(5'-phosphoribosyl)-anthranilate (PRA). The protein is Anthranilate phosphoribosyltransferase of Francisella tularensis subsp. mediasiatica (strain FSC147).